The following is a 94-amino-acid chain: Co-chaperonin GroES (94 aa).

The protein belongs to the GroES chaperonin family. Heptamer of 7 subunits arranged in a ring. Interacts with the chaperonin GroEL.

It localises to the cytoplasm. Together with the chaperonin GroEL, plays an essential role in assisting protein folding. The GroEL-GroES system forms a nano-cage that allows encapsulation of the non-native substrate proteins and provides a physical environment optimized to promote and accelerate protein folding. GroES binds to the apical surface of the GroEL ring, thereby capping the opening of the GroEL channel. The protein is Co-chaperonin GroES of Brevibacillus choshinensis.